The chain runs to 164 residues: Leucine-rich single-pass membrane protein 2 (164 aa).

The chain crosses the membrane as a helical span at residues 97 to 117 (GFLLLLALLVLTCLVLALLAV).

The protein localises to the membrane. The polypeptide is Leucine-rich single-pass membrane protein 2 (LSMEM2) (Homo sapiens (Human)).